The primary structure comprises 343 residues: Holliday junction branch migration complex subunit RuvB (343 aa).

The segment at 1–23 (MSDDFEVVRPEEQAGDEKDRDLR) is disordered. The large ATPase domain (RuvB-L) stretch occupies residues 1-183 (MSDDFEVVRP…FGIVQRFEFY (183 aa)). ATP is bound by residues Leu22, Arg23, Gly64, Lys67, Thr68, Thr69, 130–132 (EDY), Arg173, Tyr183, and Arg220. Residue Thr68 coordinates Mg(2+). The interval 184–254 (SHEELASIIS…TVAAGLKQLN (71 aa)) is small ATPAse domain (RuvB-S). The interval 257–343 (GLGLETYDRQ…LGDGQEGLFD (87 aa)) is head domain (RuvB-H). The DNA site is built by Arg312 and Arg317.

This sequence belongs to the RuvB family. In terms of assembly, homohexamer. Forms an RuvA(8)-RuvB(12)-Holliday junction (HJ) complex. HJ DNA is sandwiched between 2 RuvA tetramers; dsDNA enters through RuvA and exits via RuvB. An RuvB hexamer assembles on each DNA strand where it exits the tetramer. Each RuvB hexamer is contacted by two RuvA subunits (via domain III) on 2 adjacent RuvB subunits; this complex drives branch migration. In the full resolvosome a probable DNA-RuvA(4)-RuvB(12)-RuvC(2) complex forms which resolves the HJ.

It localises to the cytoplasm. It catalyses the reaction ATP + H2O = ADP + phosphate + H(+). In terms of biological role, the RuvA-RuvB-RuvC complex processes Holliday junction (HJ) DNA during genetic recombination and DNA repair, while the RuvA-RuvB complex plays an important role in the rescue of blocked DNA replication forks via replication fork reversal (RFR). RuvA specifically binds to HJ cruciform DNA, conferring on it an open structure. The RuvB hexamer acts as an ATP-dependent pump, pulling dsDNA into and through the RuvAB complex. RuvB forms 2 homohexamers on either side of HJ DNA bound by 1 or 2 RuvA tetramers; 4 subunits per hexamer contact DNA at a time. Coordinated motions by a converter formed by DNA-disengaged RuvB subunits stimulates ATP hydrolysis and nucleotide exchange. Immobilization of the converter enables RuvB to convert the ATP-contained energy into a lever motion, pulling 2 nucleotides of DNA out of the RuvA tetramer per ATP hydrolyzed, thus driving DNA branch migration. The RuvB motors rotate together with the DNA substrate, which together with the progressing nucleotide cycle form the mechanistic basis for DNA recombination by continuous HJ branch migration. Branch migration allows RuvC to scan DNA until it finds its consensus sequence, where it cleaves and resolves cruciform DNA. The protein is Holliday junction branch migration complex subunit RuvB of Treponema denticola (strain ATCC 35405 / DSM 14222 / CIP 103919 / JCM 8153 / KCTC 15104).